Here is a 203-residue protein sequence, read N- to C-terminus: Probable proteasome subunit beta type-1 (203 aa).

Residues 1 to 10 (MMSNEKEMTG) constitute a propeptide, removed in mature form. Thr11 serves as the catalytic Nucleophile.

Belongs to the peptidase T1B family. As to quaternary structure, the 26S proteasome consists of a 20S proteasome core and two 19S regulatory subunits. The 20S proteasome core is composed of 28 subunits that are arranged in four stacked rings, resulting in a barrel-shaped structure. The two end rings are each formed by seven alpha subunits, and the two central rings are each formed by seven beta subunits. The catalytic chamber with the active sites is on the inside of the barrel.

It localises to the cytoplasm. It is found in the nucleus. It carries out the reaction Cleavage of peptide bonds with very broad specificity.. Functionally, the proteasome degrades poly-ubiquitinated proteins in the cytoplasm and in the nucleus. It is essential for the regulated turnover of proteins and for the removal of misfolded proteins. The proteasome is a multicatalytic proteinase complex that is characterized by its ability to cleave peptides with Arg, Phe, Tyr, Leu, and Glu adjacent to the leaving group at neutral or slightly basic pH. It has an ATP-dependent proteolytic activity. In Encephalitozoon cuniculi (strain GB-M1) (Microsporidian parasite), this protein is Probable proteasome subunit beta type-1 (PRE3).